A 535-amino-acid polypeptide reads, in one-letter code: MSKLDLTKYGILNATEIIHNPSYEFLFEEETKAGLEGFEKGQLTELGAVNVMTGVYTGRSPKDKFFVMDDTTKNTIWWTSDEYKNDNKPVTPEAWKSIKKLAVEQLSGKRLFVVDTFCGANESSRLKIRFIMEVAWQAHFVKNMFIRPTEEELANYGEPDFVVMTASKAKVENYKELGLNSETAVVFNLTEKVQVILNTWYGGEMKKGMFSYMNYLLPLRGMASMHCSANTSMDEKETAIFFGLSGTGKTTLSTDPKRKLIGDDEHGWDKDGIFNFEGGCYAKVINLSRENEPDIYNAIRRNALLENVTVDAAGKIDFGDKSVTENTRVSYPIYHIENIVKPVSKAGHAKKVIFLSADAFGVLPPVSILTPEQTKYYFLSGFTAKLAGTERGITEPTPTFSACFGAAFLSLHPTKYAEELVKKMEMVGATAYLVNTGWNGTGKRISIKDTRGIIDAILDGSIDKAPTKAIPFFDFKVPTALPGVDPNILDPRDTYADAAEWTTKAKDLAERFIKNFVKFTGNDAGKALVAAGPKL.

Substrate-binding residues include Arg59, Tyr201, and Lys207. ATP-binding positions include Lys207, His226, and 243-251 (GLSGTGKTT). Mn(2+) is bound by residues Lys207 and His226. A Mn(2+)-binding site is contributed by Asp264. ATP-binding positions include Glu292, Arg328, 444–445 (RI), and Thr450. Arg328 lines the substrate pocket.

Belongs to the phosphoenolpyruvate carboxykinase (ATP) family. Mn(2+) is required as a cofactor.

It localises to the cytoplasm. The catalysed reaction is oxaloacetate + ATP = phosphoenolpyruvate + ADP + CO2. It functions in the pathway carbohydrate biosynthesis; gluconeogenesis. Functionally, involved in the gluconeogenesis. Catalyzes the conversion of oxaloacetate (OAA) to phosphoenolpyruvate (PEP) through direct phosphoryl transfer between the nucleoside triphosphate and OAA. The protein is Phosphoenolpyruvate carboxykinase (ATP) of Porphyromonas gingivalis (strain ATCC BAA-308 / W83).